We begin with the raw amino-acid sequence, 324 residues long: uncharacterized protein (324 aa).

This is an uncharacterized protein from Borreliella burgdorferi (strain ATCC 35210 / DSM 4680 / CIP 102532 / B31) (Borrelia burgdorferi).